A 189-amino-acid chain; its full sequence is MyoD family inhibitor domain-containing protein 2 (189 aa).

Residues Lys28 to Tyr188 enclose the MDFI domain.

It belongs to the MDFI family.

This Homo sapiens (Human) protein is MyoD family inhibitor domain-containing protein 2.